The chain runs to 307 residues: Nicotinamide/nicotinic acid mononucleotide adenylyltransferase 2 (307 aa).

The NAD(+) site is built by S16 and F17. Residue H24 coordinates ATP. Residues W92 and T95 each coordinate NAD(+). 2 S-palmitoyl cysteine lipidation sites follow: C164 and C165. NAD(+) contacts are provided by G200, D202, L212, W213, and R232. An ATP-binding site is contributed by 271-274 (TKSR).

Belongs to the eukaryotic NMN adenylyltransferase family. In terms of assembly, monomer. Mg(2+) serves as cofactor. Post-translationally, degraded in response to injured neurite. Degradation is caused by polyubiquitination by MYCBP2 after recognition by FBXO45. Palmitoylated; palmitoylation is required for membrane association.

It is found in the golgi apparatus membrane. The protein resides in the cytoplasmic vesicle membrane. It localises to the cytoplasm. Its subcellular location is the cell projection. The protein localises to the axon. The catalysed reaction is beta-nicotinamide D-ribonucleotide + ATP + H(+) = diphosphate + NAD(+). It catalyses the reaction nicotinate beta-D-ribonucleotide + ATP + H(+) = deamido-NAD(+) + diphosphate. Its pathway is cofactor biosynthesis; NAD(+) biosynthesis; NAD(+) from nicotinamide D-ribonucleotide: step 1/1. The protein operates within cofactor biosynthesis; NAD(+) biosynthesis; deamido-NAD(+) from nicotinate D-ribonucleotide: step 1/1. Its activity is regulated as follows. Inhibited by P1-(adenosine-5')-P3-(nicotinamide-riboside-5')-triphosphate (Np3AD) and P1-(adenosine-5')-P4-(nicotinamide-riboside-5')-tetraphosphate (Np4AD). Nicotinamide/nicotinate-nucleotide adenylyltransferase that acts as an axon maintenance factor. Axon survival factor required for the maintenance of healthy axons: acts by delaying Wallerian axon degeneration, an evolutionarily conserved process that drives the loss of damaged axons. Catalyzes the formation of NAD(+) from nicotinamide mononucleotide (NMN) and ATP. Can also use the deamidated form; nicotinic acid mononucleotide (NaMN) as substrate but with a lower efficiency. Cannot use triazofurin monophosphate (TrMP) as substrate. Also catalyzes the reverse reaction, i.e. the pyrophosphorolytic cleavage of NAD(+). For the pyrophosphorolytic activity prefers NAD(+), NADH and NaAD as substrates and degrades nicotinic acid adenine dinucleotide phosphate (NHD) less effectively. Fails to cleave phosphorylated dinucleotides NADP(+), NADPH and NaADP(+). Also acts as an activator of ADP-ribosylation by supporting the catalytic activity of PARP16 and promoting mono-ADP-ribosylation of ribosomes by PARP16. May be involved in the maintenance of axonal integrity. In Pongo abelii (Sumatran orangutan), this protein is Nicotinamide/nicotinic acid mononucleotide adenylyltransferase 2 (NMNAT2).